The sequence spans 505 residues: Peroxisome proliferator-activated receptor gamma (505 aa).

Thr84 carries O-linked (GlcNAc) threonine glycosylation. At Ser112 the chain carries Phosphoserine; by MAPK. Positions 136–210 (AIECRVCGDK…VGMSHNAIRF (75 aa)) form a DNA-binding region, nuclear receptor. NR C4-type zinc fingers lie at residues 139 to 159 (CRVC…CEGC) and 176 to 198 (CDLN…FQKC). The segment at 205-280 (HNAIRFGRMP…DKSPFVIYDM (76 aa)) is interaction with FAM120B. An NR LBD domain is found at 238 to 503 (DLRALAKHLY…HPLLQEIYKD (266 aa)). Lys252 participates in a covalent cross-link: Glycyl lysine isopeptide (Lys-Gly) (interchain with G-Cter in ubiquitin). The 9aaTAD motif lies at 495 to 503 (PLLQEIYKD).

This sequence belongs to the nuclear hormone receptor family. NR1 subfamily. Interacts with FOXO1 (acetylated form). Heterodimer with other nuclear receptors, such as RXRA. The heterodimer with the retinoic acid receptor RXRA is called adipocyte-specific transcription factor ARF6. Interacts with NCOA6 coactivator, leading to a strong increase in transcription of target genes. Interacts with coactivator PPARBP, leading to a mild increase in transcription of target genes. Interacts with NOCA7 in a ligand-inducible manner. Interacts with NCOA1 and NCOA2 LXXLL motifs. Interacts with ASXL1, ASXL2, DNTTIP2, FAM120B, MAP2K1/MEK1, NR0B2, PDPK1, PRDM16, PRMT2 and TGFB1I1. Interacts (when activated by agonist) with PPP5C. Interacts with HELZ2 and THRAP3; the interaction stimulates the transcriptional activity of PPARG. Interacts with PER2, the interaction is ligand dependent and blocks PPARG recruitment to target promoters. Interacts with NOCT. Interacts with ACTN4. Interacts (when in the liganded conformation) with GPS2. Interacts with CRY1 and CRY2 in a ligand-dependent manner. In the absence of hormonal ligand, interacts with TACC1. In macrophages, interacts with PAQR3 and STUB1; the interactions promote PPARG poylubiquitination and STUB1-mediated degradation. In terms of processing, phosphorylated by MAPK. The phosphorylation inhibits PPAR gamma activity. O-GlcNAcylation at Thr-84 reduces transcriptional activity in adipocytes. Post-translationally, phosphorylated at basal conditions and dephosphorylated when treated with the ligand. May be dephosphorylated by PPP5C. The phosphorylated form may be inactive and dephosphorylation at induces adipogenic activity. In terms of processing, ubiquitinated by E3 ubiquitin-protein ligase complex containing FBXO9; leading to proteasomal degradation. Ubiquitinated at Lys-252 by TRIM55 leading to proteasomal degradation. Ubiquitinated by E3 ubiquitin-protein ligase STUB1/CHIP; leading to proteasomal degradation. Highest expression in adipose tissue.

It localises to the nucleus. It is found in the cytoplasm. Its activity is regulated as follows. PDPK1 activates its transcriptional activity independently of its kinase activity. In terms of biological role, nuclear receptor that binds peroxisome proliferators such as hypolipidemic drugs and fatty acids. Once activated by a ligand, the nuclear receptor binds to DNA specific PPAR response elements (PPRE) and modulates the transcription of its target genes, such as acyl-CoA oxidase. It therefore controls the peroxisomal beta-oxidation pathway of fatty acids. Key regulator of adipocyte differentiation and glucose homeostasis. ARF6 acts as a key regulator of the tissue-specific adipocyte P2 (aP2) enhancer. Acts as a critical regulator of gut homeostasis by suppressing NF-kappa-B-mediated pro-inflammatory responses. Plays a role in the regulation of cardiovascular circadian rhythms by regulating the transcription of BMAL1 in the blood vessels. The protein is Peroxisome proliferator-activated receptor gamma (Pparg) of Rattus norvegicus (Rat).